The primary structure comprises 622 residues: Cilia- and flagella-associated protein 206 (622 aa).

The protein belongs to the CFAP206 family.

It is found in the cytoplasm. Its subcellular location is the cytoskeleton. It localises to the cilium axoneme. The protein resides in the cilium basal body. Essential for sperm motility and is involved in the regulation of the beating frequency of motile cilia on the epithelial cells of the respiratory tract. Required for the establishment of radial spokes in sperm flagella. This Rattus norvegicus (Rat) protein is Cilia- and flagella-associated protein 206.